Reading from the N-terminus, the 391-residue chain is Multidrug resistance protein MdtL (391 aa).

Helical transmembrane passes span 4–24, 42–62, 69–89, 93–113, 134–154, 158–178, 203–222, 245–265, 269–289, 293–313, 331–351, and 356–376; these read FLIC…MYLV, IAFS…GKVA, PVAI…SLAE, LFLA…VVAF, GITC…MLNF, SLFW…LFIL, FFLS…LTFV, ALTA…LGIF, TLMI…AVSP, VSLF…GVAM, LGIA…VVGI, and MLIG…MFVA.

The protein belongs to the major facilitator superfamily. DHA1 family. MdtL (TC 2.A.1.2.22) subfamily.

The protein resides in the cell inner membrane. Functionally, confers resistance to chloramphenicol. The polypeptide is Multidrug resistance protein MdtL (Escherichia coli O81 (strain ED1a)).